The chain runs to 69 residues: Small ribosomal subunit protein uS7 (69 aa).

Belongs to the universal ribosomal protein uS7 family. As to quaternary structure, part of the 30S ribosomal subunit.

Functionally, one of the primary rRNA binding proteins, it binds directly to 16S rRNA where it nucleates assembly of the head domain of the 30S subunit. Is located at the subunit interface close to the decoding center. The polypeptide is Small ribosomal subunit protein uS7 (rps7) (Methanococcoides methylutens).